A 199-amino-acid chain; its full sequence is Glycerol-3-phosphate acyltransferase (199 aa).

Transmembrane regions (helical) follow at residues 4-24 (FALF…AILI), 56-76 (LAVL…GYYL), 80-100 (QFEL…PIFF), 115-135 (IAPI…FVFL), and 154-176 (YVWW…LIYR).

It belongs to the PlsY family. As to quaternary structure, probably interacts with PlsX.

The protein resides in the cell inner membrane. The catalysed reaction is an acyl phosphate + sn-glycerol 3-phosphate = a 1-acyl-sn-glycero-3-phosphate + phosphate. Its pathway is lipid metabolism; phospholipid metabolism. In terms of biological role, catalyzes the transfer of an acyl group from acyl-phosphate (acyl-PO(4)) to glycerol-3-phosphate (G3P) to form lysophosphatidic acid (LPA). This enzyme utilizes acyl-phosphate as fatty acyl donor, but not acyl-CoA or acyl-ACP. The protein is Glycerol-3-phosphate acyltransferase of Haemophilus influenzae (strain PittEE).